Reading from the N-terminus, the 108-residue chain is RNA silencing suppressor (108 aa).

The basic stretch occupies residues 47 to 50 (RRRR). The C4-type zinc-finger motif lies at 57-78 (CHRCYRLWPPTVFTTRCDNKYC).

This sequence belongs to the carlaviruses nucleic acid-binding protein family.

In terms of biological role, suppressor of viral-induced RNA silencing. The potential mechanism of action is based on sequestering siRNAs. The protein is RNA silencing suppressor of Solanum tuberosum (Potato).